A 626-amino-acid polypeptide reads, in one-letter code: Extracellular metalloproteinase 1 (626 aa).

An N-terminal signal peptide occupies residues 1–17 (MLSSLLAGAGLVALAAS). A propeptide spanning residues 18–241 (HPTSHGNALT…IHGVVDYSAD (224 aa)) is cleaved from the precursor. N-linked (GlcNAc...) asparagine glycosylation occurs at N315. H425 contacts Zn(2+). E426 is an active-site residue. A Zn(2+)-binding site is contributed by H429. Residues 606–626 (GSGARYSSTARTGSTALPSGC) form a disordered region. Positions 610-626 (RYSSTARTGSTALPSGC) are enriched in polar residues.

The protein belongs to the peptidase M36 family. Zn(2+) is required as a cofactor.

It localises to the secreted. Secreted metalloproteinase that allows assimilation of proteinaceous substrates. This is Extracellular metalloproteinase 1 (MEP1) from Phaeosphaeria nodorum (strain SN15 / ATCC MYA-4574 / FGSC 10173) (Glume blotch fungus).